The primary structure comprises 467 residues: Probable tryptophanase (467 aa).

Position 263 is an N6-(pyridoxal phosphate)lysine (lysine 263).

It belongs to the beta-eliminating lyase family. Requires pyridoxal 5'-phosphate as cofactor.

The catalysed reaction is L-tryptophan + H2O = indole + pyruvate + NH4(+). It functions in the pathway amino-acid degradation; L-tryptophan degradation via pyruvate pathway; indole and pyruvate from L-tryptophan: step 1/1. This is Probable tryptophanase (tnaA) from Aeropyrum pernix (strain ATCC 700893 / DSM 11879 / JCM 9820 / NBRC 100138 / K1).